Consider the following 125-residue polypeptide: U11-myrmicitoxin-Ta1a (125 aa).

The first 21 residues, 1–21 (MKTVIFILGFAFVAILIPTNG), serve as a signal peptide directing secretion. Residues 22-91 (ESMADADAMA…RAMAAAYAAA (70 aa)) constitute a propeptide that is removed on maturation. The cysteines at positions 101 and 124 are disulfide-linked.

This sequence belongs to the formicidae venom precursor-01 superfamily. As to expression, expressed by the venom gland.

Its subcellular location is the secreted. It localises to the target cell membrane. Functionally, neurotoxin that causes irreversible rapid flaccid paralysis in blowflies and honeybees upon intrathoracic injection. Causes a quick and irreversible cytolytic effect (at 10 uM) indicating it possibly acts as a pore-forming peptide. Shows only weak effect on aphids (A.pisum) at high doses 24 hours post intrathoracic injection. In vitro, is not cytotoxic on the dipteran S2 Drosophila embryonic cell line. This Tetramorium africanum (Fierce ant) protein is U11-myrmicitoxin-Ta1a.